The primary structure comprises 90 residues: Small ribosomal subunit protein bS16 (90 aa).

The protein belongs to the bacterial ribosomal protein bS16 family.

The polypeptide is Small ribosomal subunit protein bS16 (Streptococcus equi subsp. zooepidemicus (strain H70)).